The primary structure comprises 496 residues: Probable cytosol aminopeptidase (496 aa).

Residues Lys-266 and Asp-271 each contribute to the Mn(2+) site. The active site involves Lys-278. Mn(2+) is bound by residues Asp-290, Asp-349, and Glu-351. Arg-353 is an active-site residue.

The protein belongs to the peptidase M17 family. The cofactor is Mn(2+).

It is found in the cytoplasm. The catalysed reaction is Release of an N-terminal amino acid, Xaa-|-Yaa-, in which Xaa is preferably Leu, but may be other amino acids including Pro although not Arg or Lys, and Yaa may be Pro. Amino acid amides and methyl esters are also readily hydrolyzed, but rates on arylamides are exceedingly low.. It catalyses the reaction Release of an N-terminal amino acid, preferentially leucine, but not glutamic or aspartic acids.. Presumably involved in the processing and regular turnover of intracellular proteins. Catalyzes the removal of unsubstituted N-terminal amino acids from various peptides. The polypeptide is Probable cytosol aminopeptidase (Trichodesmium erythraeum (strain IMS101)).